The sequence spans 208 residues: Thymidylate kinase (208 aa).

Position 10–17 (10–17 (GPEGSGKT)) interacts with ATP.

This sequence belongs to the thymidylate kinase family.

It catalyses the reaction dTMP + ATP = dTDP + ADP. In terms of biological role, phosphorylation of dTMP to form dTDP in both de novo and salvage pathways of dTTP synthesis. The protein is Thymidylate kinase of Bacillus mycoides (strain KBAB4) (Bacillus weihenstephanensis).